The primary structure comprises 447 residues: Probable tRNA methyltransferase 9B (447 aa).

Serine 212 carries the phosphoserine modification. Disordered stretches follow at residues 274–306 and 320–348; these read AWANSTVSQQPSRHPSLDLHAPEPFSTKGPNLD and WLRTPGTSDNFSGHKGGGSRRKEGGNFLD. The span at 276-286 shows a compositional bias: polar residues; sequence ANSTVSQQPSR.

Belongs to the methyltransferase superfamily.

Functionally, may modify wobble uridines in specific arginine and glutamic acid tRNAs. Acts as a tumor suppressor by promoting the expression of LIN9. The sequence is that of Probable tRNA methyltransferase 9B (Trmt9b) from Mus musculus (Mouse).